A 1318-amino-acid chain; its full sequence is 1-phosphatidylinositol 4,5-bisphosphate phosphodiesterase classes I and II (1318 aa).

One can recognise a PI-PLC X-box domain in the interval 318 to 466; it reads DDMDQPMSHY…LRRKIIIKNK (149 aa). Active-site residues include H333 and H378. Substrate is bound by residues K464 and K466. Residues 466–481 show a composition bias toward basic residues; that stretch reads KKKHHHHHHHHHHKKP. Disordered stretches follow at residues 466-489 and 505-594; these read KKKH…TPAA and QQVG…KETE. Composition is skewed to low complexity over residues 528–543 and 554–563; these read ATGT…AGHA and KDSTGSSDSD. The segment covering 571 to 580 has biased composition (polar residues); sequence LPNTTPNLPS. A compositionally biased stretch (basic and acidic residues) spans 585-594; the sequence is PPEKAQKETE. The 117-residue stretch at 599–715 folds into the PI-PLC Y-box domain; that stretch reads ISALVNYVQP…GYLLKPEFMR (117 aa). Residues S628 and R655 each coordinate substrate. Positions 715–843 constitute a C2 domain; sequence RRSDRRLDPF…NLRSEVGQPI (129 aa). Disordered stretches follow at residues 1080–1112 and 1296–1318; these read LDLG…TQES and GSHS…EMKT. Over residues 1088–1107 the composition is skewed to low complexity; that stretch reads ESAAADAGEDLAGGSSSLDG.

Expressed in neuronal cell bodies of the optic lobe, central brain, and thoracic ganglia in adults, and the brain of larvae.

The enzyme catalyses a 1,2-diacyl-sn-glycero-3-phospho-(1D-myo-inositol-4,5-bisphosphate) + H2O = 1D-myo-inositol 1,4,5-trisphosphate + a 1,2-diacyl-sn-glycerol + H(+). Functionally, the production of the second messenger molecules diacylglycerol (DAG) and inositol 1,4,5-trisphosphate (IP3) is mediated by activated phosphatidylinositol-specific phospholipase C enzymes. The protein is 1-phosphatidylinositol 4,5-bisphosphate phosphodiesterase classes I and II (Plc21C) of Drosophila melanogaster (Fruit fly).